A 510-amino-acid chain; its full sequence is Protein fork head (510 aa).

2 disordered regions span residues methionine 1–alanine 62 and alanine 175–serine 205. Residues serine 20–glycine 39 show a composition bias toward gly residues. A compositionally biased stretch (low complexity) spans asparagine 47–proline 60. Phosphoserine occurs at positions 187 and 190. The segment at residues alanine 209–leucine 300 is a DNA-binding region (fork-head). Residues glutamate 309–alanine 359 are disordered. Phosphoserine occurs at positions 320, 322, and 330. Residues histidine 341–histidine 356 are compositionally biased toward basic residues.

It localises to the nucleus. Fkh promotes terminal as opposed to segmental development. In the absence of fkh, this developmental switch does not occur. The nuclear localization of the fkh protein suggest that fkh regulates the transcription of other, subordinate, genes. The chain is Protein fork head (fkh) from Drosophila melanogaster (Fruit fly).